The primary structure comprises 504 residues: Sodium-coupled neutral amino acid transporter 3 (504 aa).

An N-linked (GlcNAc...) asparagine glycan is attached at N74. 5 consecutive transmembrane segments (helical) span residues 83-103 (GILGLAYAMANTGIILFLFLL), 106-126 (VALLSSYSIHLLLKSSGVVGI), 144-164 (AAALAITLQNIGAMSSYLYII), 187-207 (MNGNYLVILVSVTIILPLALM), and 213-233 (LGYSSGFSLSCMVFFLIAVIY). An intrachain disulfide couples C240 to C275. 4 N-linked (GlcNAc...) asparagine glycosylation sites follow: N247, N248, N252, and N323. Helical transmembrane passes span 324–344 (LSIAVMYIMYFLAALFGYLTF), 366–386 (ILCVRVAVLTAVTLTVPIVLF), 408–428 (VLIAVGLLTCINLLVIFAPNI), 431–451 (IFGVIGATSAPFLIFIFPAIF), and 471–491 (ALCFAMLGFLLMTMSLSFIII).

The protein belongs to the amino acid/polyamine transporter 2 family.

It localises to the cell membrane. Its subcellular location is the basolateral cell membrane. It carries out the reaction L-glutamine(out) + Na(+)(out) + H(+)(in) = L-glutamine(in) + Na(+)(in) + H(+)(out). It catalyses the reaction L-asparagine(out) + Na(+)(out) + H(+)(in) = L-asparagine(in) + Na(+)(in) + H(+)(out). The enzyme catalyses L-histidine(out) + Na(+)(out) + H(+)(in) = L-histidine(in) + Na(+)(in) + H(+)(out). Functionally, symporter that cotransports specific neutral amino acids and sodium ions, coupled to an H(+) antiporter activity. Mainly participates in the glutamate-GABA-glutamine cycle in brain where it transports L-glutamine from astrocytes in the intercellular space for the replenishment of both neurotransmitters glutamate and gamma-aminobutyric acid (GABA) in neurons and also functions as the major influx transporter in ganglion cells mediating the uptake of glutamine. The transport activity is specific for L-glutamine, L-histidine and L-asparagine. The transport is electroneutral coupled to the cotransport of 1 Na(+) and the antiport of 1 H(+). The transport is pH dependent, saturable, Li(+) tolerant and functions in both direction depending on the concentration gradients of its substrates and cotransported ions. Also mediates an amino acid-gated H(+) conductance that is not stoichiometrically coupled to the amino acid transport but which influences the ionic gradients that drive the amino acid transport. In addition, may play a role in nitrogen metabolism, amino acid homeostasis, glucose metabolism and renal ammoniagenesis. In Homo sapiens (Human), this protein is Sodium-coupled neutral amino acid transporter 3.